Reading from the N-terminus, the 377-residue chain is MAANKGINGGIKNHFIAFLGEFVGTFLFLFFAYGGTQTANQTSQKNPSIVASPDINQLLYIALIFGFSLTVNVWIFFRVSGGLFNPAVTIALCLVGVVGPVRSIFIFIAQVVASIAAAAAVRGLLPGDTVLFSCALAPGTSIAQGLFLEMFFTIELVFTILMLAAEKTKVTFVAPVGIGLSLFVAELMGVAWTGGALNPARAFGAEVIGGFRGYHWIYWLGPLMGAVLAAGFYKVIKFLNYEQVNGEQDLSAEEKQLKDEKKARKKEERRRKQNFAGLFQTGRMHHHHHANTRNATVNDAGDGRPNSAPPYTEPPAQQQTWPHSASTIRENEDFSRFAEMGSQDGIVITREQPAEQYRLSGERYVQDANAQNRAKTP.

Topologically, residues 1 to 14 (MAANKGINGGIKNH) are cytoplasmic. A helical membrane pass occupies residues 15 to 35 (FIAFLGEFVGTFLFLFFAYGG). At 36–56 (TQTANQTSQKNPSIVASPDIN) the chain is on the extracellular side. Asn40 carries N-linked (GlcNAc...) asparagine glycosylation. A helical membrane pass occupies residues 57 to 77 (QLLYIALIFGFSLTVNVWIFF). Residues 78–87 (RVSGGLFNPA) lie on the Cytoplasmic side of the membrane. The short motif at 85 to 87 (NPA) is the NPA 1 element. Residues 88–108 (VTIALCLVGVVGPVRSIFIFI) form a helical membrane-spanning segment. The Extracellular segment spans residues 109–144 (AQVVASIAAAAAVRGLLPGDTVLFSCALAPGTSIAQ). Residues 145-165 (GLFLEMFFTIELVFTILMLAA) traverse the membrane as a helical segment. Residues 166–171 (EKTKVT) are Cytoplasmic-facing. A helical membrane pass occupies residues 172–192 (FVAPVGIGLSLFVAELMGVAW). Residues 193–215 (TGGALNPARAFGAEVIGGFRGYH) lie on the Extracellular side of the membrane. The NPA 2 signature appears at 198–200 (NPA). Residues 216 to 236 (WIYWLGPLMGAVLAAGFYKVI) traverse the membrane as a helical segment. The Cytoplasmic portion of the chain corresponds to 237-377 (KFLNYEQVNG…ANAQNRAKTP (141 aa)). 2 disordered regions span residues 278–332 (LFQT…RENE) and 358–377 (RLSG…AKTP). 2 stretches are compositionally biased toward polar residues: residues 315–328 (PAQQ…ASTI) and 368–377 (ANAQNRAKTP).

Belongs to the MIP/aquaporin (TC 1.A.8) family.

It is found in the membrane. It catalyses the reaction H2O(in) = H2O(out). The catalysed reaction is glycerol(in) = glycerol(out). In terms of biological role, water channel required to facilitate the transport of water across membranes. Involved in conidiation. The chain is Aquaporin-2 from Botryotinia fuckeliana (strain B05.10) (Noble rot fungus).